The chain runs to 209 residues: Glutathione S-transferase 1, isoform D (209 aa).

The region spanning 1 to 80 is the GST N-terminal domain; sequence MDFYYLPGSA…YLAEKYGKDD (80 aa). Glutathione is bound by residues S9, 50–52, and 64–66; these read HCI and ESR. The region spanning 86–207 is the GST C-terminal domain; the sequence is DPQKRAVVNQ…AGADEFKAKF (122 aa).

The protein belongs to the GST superfamily. Theta family. Homodimer.

The enzyme catalyses RX + glutathione = an S-substituted glutathione + a halide anion + H(+). It catalyses the reaction 1,1,1-trichloro-2,2-bis(4-chlorophenyl)ethane = 1,1-dichloro-2,2-bis(4-chlorophenyl)ethylene + chloride + H(+). With respect to regulation, inhibited by S-hexylglutathione. Conjugation of reduced glutathione to a wide number of exogenous and endogenous hydrophobic electrophiles. Has DDT dehydrochlorinase activity. The sequence is that of Glutathione S-transferase 1, isoform D (GstD1) from Anopheles gambiae (African malaria mosquito).